The chain runs to 83 residues: Conotoxin MiEr92 (83 aa).

Positions 1–22 are cleaved as a signal peptide; the sequence is MKLTCVLIVIMLFLTVCPLITA. The propeptide occupies 23–49; the sequence is DHSRDKQEHPAMRLKDRIRYLRRGKLT. 3 disulfide bridges follow: Cys-52/Cys-67, Cys-59/Cys-72, and Cys-66/Cys-81.

This sequence belongs to the conotoxin O1 superfamily. In terms of tissue distribution, expressed by the venom duct.

It localises to the secreted. In Conus miles (Soldier cone), this protein is Conotoxin MiEr92.